Consider the following 263-residue polypeptide: MNQSQAPVGVFDSGVGGLSVLREIRQLLPNESLLYVADSGHVPYGEKSAEYIRERCVLITEHLLAQGAKALVLACNTATAAAAAELRERYPQLPIVGMEPAVKPAAAATRSGVVGVLATTGTLKSAKFAALLDRFASDVRVITQPCPGLVECIEAGALQAPATRELLQGYVEPLLAEGCDTLILGCTHYPFLKPLLHSLVPDSVSLIDTGAAVARQLQRLLGQHELLATQPAQATRYWSSGDIQRMQAVLPLLLGEQAQVHVF.

Substrate contacts are provided by residues 12–13 and 44–45; these read DS and YG. Catalysis depends on C75, which acts as the Proton donor/acceptor. 76–77 contacts substrate; that stretch reads NT. C186 functions as the Proton donor/acceptor in the catalytic mechanism. 187 to 188 contributes to the substrate binding site; the sequence is TH.

The protein belongs to the aspartate/glutamate racemases family.

It carries out the reaction L-glutamate = D-glutamate. It participates in cell wall biogenesis; peptidoglycan biosynthesis. In terms of biological role, provides the (R)-glutamate required for cell wall biosynthesis. This chain is Glutamate racemase, found in Ectopseudomonas mendocina (strain ymp) (Pseudomonas mendocina).